The chain runs to 328 residues: C-type lectin domain family 4 member K (328 aa).

Residues 1-43 (MTVEKEAPDAHFTVDKQNISLWPREPPPKSGPSLVPGKTPTVR) lie on the Cytoplasmic side of the membrane. A helical; Signal-anchor for type II membrane protein transmembrane segment spans residues 44–64 (AALICLTLVLVASVLLQAVLY). At 65–328 (PRFMGTISDV…CKRPYVPSEP (264 aa)) the chain is on the extracellular side. N-linked (GlcNAc...) asparagine glycans are attached at residues asparagine 87, asparagine 113, and asparagine 180. Positions 145–190 (EEVSTLNAQIPELKSDLEKASALNTKIRALQGSLENMSKLLKRQND) form a coiled coil. Positions 202 to 320 (FKGNFYYFSL…CDKTFLFICK (119 aa)) constitute a C-type lectin domain. 2 disulfide bridges follow: cysteine 223–cysteine 319 and cysteine 295–cysteine 311.

In terms of assembly, homotrimer. Exclusively expressed by Langerhans cells. Expressed in astrocytoma and malignant ependymoma, but not in normal brain tissues.

Its subcellular location is the membrane. Its function is as follows. Calcium-dependent lectin displaying mannose-binding specificity. Induces the formation of Birbeck granules (BGs); is a potent regulator of membrane superimposition and zippering. Binds to sulfated as well as mannosylated glycans, keratan sulfate (KS) and beta-glucans. Facilitates uptake of antigens and is involved in the routing and/or processing of antigen for presentation to T cells. Major receptor on primary Langerhans cells for Candida species, Saccharomyces species, and Malassezia furfur. Protects against human immunodeficiency virus-1 (HIV-1) infection. Binds to high-mannose structures present on the envelope glycoprotein which is followed by subsequent targeting of the virus to the Birbeck granules leading to its rapid degradation. The chain is C-type lectin domain family 4 member K (CD207) from Homo sapiens (Human).